A 354-amino-acid chain; its full sequence is Fructose-bisphosphate aldolase (354 aa).

D-glyceraldehyde 3-phosphate is bound at residue serine 50. Aspartate 83 acts as the Proton donor in catalysis. Residues histidine 84, aspartate 105, glutamate 142, and histidine 198 each coordinate Zn(2+). Glycine 199 serves as a coordination point for dihydroxyacetone phosphate. Histidine 232 contributes to the Zn(2+) binding site. Dihydroxyacetone phosphate contacts are provided by residues 233 to 235 (GSS) and 275 to 278 (NIDT).

Belongs to the class II fructose-bisphosphate aldolase family. Requires Zn(2+) as cofactor.

It catalyses the reaction beta-D-fructose 1,6-bisphosphate = D-glyceraldehyde 3-phosphate + dihydroxyacetone phosphate. The protein operates within carbohydrate degradation; glycolysis; D-glyceraldehyde 3-phosphate and glycerone phosphate from D-glucose: step 4/4. Functionally, catalyzes the aldol condensation of dihydroxyacetone phosphate (DHAP or glycerone-phosphate) with glyceraldehyde 3-phosphate (G3P) to form fructose 1,6-bisphosphate (FBP) in gluconeogenesis and the reverse reaction in glycolysis. This Pseudomonas aeruginosa (strain ATCC 15692 / DSM 22644 / CIP 104116 / JCM 14847 / LMG 12228 / 1C / PRS 101 / PAO1) protein is Fructose-bisphosphate aldolase (fba).